The sequence spans 287 residues: Syntaxin-11 (287 aa).

A coiled-coil region spans residues 41-71; the sequence is LESLYRDIRDIQDENQLLVADVKRLGKQNAR. A t-SNARE coiled-coil homology domain is found at 204–266; that stretch reads LNEIESRHRE…GQAKAQVRKA (63 aa).

This sequence belongs to the syntaxin family. As to quaternary structure, interacts with the SNARE proteins SNAP-23 and VAMP.

The protein localises to the membrane. Its subcellular location is the golgi apparatus. It is found in the trans-Golgi network membrane. Its function is as follows. SNARE that acts to regulate protein transport between late endosomes and the trans-Golgi network. This is Syntaxin-11 (STX11) from Homo sapiens (Human).